A 177-amino-acid chain; its full sequence is MAEITTIARPYAKAAFDFAIENNAVDSWAEMLNFAAMVSENETIKPLLAGGLASNKLAELFIGVCGEQVNEQGQNLLKVMAENGRLEVLPAVAQQFVELCNEWAKEIEATVVSAVELTSEQQQDISVSLEKRLARKVKLNCSIDASLVAGVIITAGDLVIDGSVRGKISRLSDTLQS.

Belongs to the ATPase delta chain family. As to quaternary structure, F-type ATPases have 2 components, F(1) - the catalytic core - and F(0) - the membrane proton channel. F(1) has five subunits: alpha(3), beta(3), gamma(1), delta(1), epsilon(1). F(0) has three main subunits: a(1), b(2) and c(10-14). The alpha and beta chains form an alternating ring which encloses part of the gamma chain. F(1) is attached to F(0) by a central stalk formed by the gamma and epsilon chains, while a peripheral stalk is formed by the delta and b chains.

It is found in the cell inner membrane. Its function is as follows. F(1)F(0) ATP synthase produces ATP from ADP in the presence of a proton or sodium gradient. F-type ATPases consist of two structural domains, F(1) containing the extramembraneous catalytic core and F(0) containing the membrane proton channel, linked together by a central stalk and a peripheral stalk. During catalysis, ATP synthesis in the catalytic domain of F(1) is coupled via a rotary mechanism of the central stalk subunits to proton translocation. This protein is part of the stalk that links CF(0) to CF(1). It either transmits conformational changes from CF(0) to CF(1) or is implicated in proton conduction. The protein is ATP synthase subunit delta of Shewanella sediminis (strain HAW-EB3).